The primary structure comprises 133 residues: Histone H2A.1 (133 aa).

The disordered stretch occupies residues 1–23 (MSTTGKGGKAKGKTASSKQVSRS). Serine 2 carries the N-acetylserine modification. 5 positions are modified to N6-acetyllysine: lysine 6, lysine 9, lysine 11, lysine 13, and lysine 18. Serine 123 carries the post-translational modification Phosphoserine. Lysine 124 participates in a covalent cross-link: Glycyl lysine isopeptide (Lys-Gly) (interchain with G-Cter in ubiquitin). At serine 129 the chain carries Phosphoserine.

The protein belongs to the histone H2A family. In terms of assembly, the nucleosome is a histone octamer containing two molecules each of H2A, H2B, H3 and H4 assembled in one H3-H4 heterotetramer and two H2A-H2B heterodimers. The octamer wraps approximately 147 bp of DNA. Post-translationally, monoubiquitination of Lys-124 gives a specific tag for epigenetic transcriptional repression. In terms of processing, acetylation occurs almost exclusively in the MAC.

The protein localises to the nucleus. It is found in the chromosome. In terms of biological role, core component of nucleosome. Nucleosomes wrap and compact DNA into chromatin, limiting DNA accessibility to the cellular machineries which require DNA as a template. Histones thereby play a central role in transcription regulation, DNA repair, DNA replication and chromosomal stability. DNA accessibility is regulated via a complex set of post-translational modifications of histones, also called histone code, and nucleosome remodeling. The sequence is that of Histone H2A.1 (HTA2) from Tetrahymena pyriformis.